The sequence spans 122 residues: Large ribosomal subunit protein bL12 (122 aa).

It belongs to the bacterial ribosomal protein bL12 family. In terms of assembly, homodimer. Part of the ribosomal stalk of the 50S ribosomal subunit. Forms a multimeric L10(L12)X complex, where L10 forms an elongated spine to which 2 to 4 L12 dimers bind in a sequential fashion. Binds GTP-bound translation factors.

Functionally, forms part of the ribosomal stalk which helps the ribosome interact with GTP-bound translation factors. Is thus essential for accurate translation. In Buchnera aphidicola subsp. Acyrthosiphon pisum (strain Tuc7), this protein is Large ribosomal subunit protein bL12.